The sequence spans 287 residues: ATP synthase gamma chain (287 aa).

This sequence belongs to the ATPase gamma chain family. In terms of assembly, F-type ATPases have 2 components, CF(1) - the catalytic core - and CF(0) - the membrane proton channel. CF(1) has five subunits: alpha(3), beta(3), gamma(1), delta(1), epsilon(1). CF(0) has three main subunits: a, b and c.

It is found in the cell inner membrane. Its function is as follows. Produces ATP from ADP in the presence of a proton gradient across the membrane. The gamma chain is believed to be important in regulating ATPase activity and the flow of protons through the CF(0) complex. The chain is ATP synthase gamma chain from Xanthomonas axonopodis pv. citri (strain 306).